Reading from the N-terminus, the 542-residue chain is Glutamyl-tRNA reductase 2, chloroplastic (542 aa).

Substrate-binding positions include 142 to 145 (TCNR), serine 202, 207 to 209 (EGQ), and glutamine 213. Cysteine 143 (nucleophile) is an active-site residue. 284 to 289 (GAGKMG) lines the NADP(+) pocket.

It belongs to the glutamyl-tRNA reductase family. As to expression, found in all tissues examined.

It is found in the plastid. The protein resides in the chloroplast. The catalysed reaction is (S)-4-amino-5-oxopentanoate + tRNA(Glu) + NADP(+) = L-glutamyl-tRNA(Glu) + NADPH + H(+). It functions in the pathway porphyrin-containing compound metabolism; protoporphyrin-IX biosynthesis; 5-aminolevulinate from L-glutamyl-tRNA(Glu): step 1/2. Its function is as follows. Catalyzes the NADPH-dependent reduction of glutamyl-tRNA(Glu) to glutamate 1-semialdehyde (GSA). In Cucumis sativus (Cucumber), this protein is Glutamyl-tRNA reductase 2, chloroplastic (HEMA2).